Here is a 392-residue protein sequence, read N- to C-terminus: Alkaline phosphatase L (392 aa).

The N-terminal stretch at 1–23 is a signal peptide; it reads MYKRSLIAASLSVAALVSAQAMA.

The protein belongs to the PstS family. In terms of assembly, homodimer.

The protein resides in the secreted. It localises to the periplasm. The enzyme catalyses a phosphate monoester + H2O = an alcohol + phosphate. Its function is as follows. Has both a phosphomonoesterase and phosphodiesterase activity. This chain is Alkaline phosphatase L, found in Pseudomonas aeruginosa (strain UCBPP-PA14).